Consider the following 1270-residue polypeptide: Myosin-1 (1270 aa).

Residues 1 to 40 form a disordered region; it reads MGHSRRPAGGEKKSRGFGRSKAAADVGDGRQAGKPQVKKA. The 680-residue stretch at 50–729 folds into the Myosin motor domain; sequence IGVSDLTLLS…TLFALETMRD (680 aa). 143-150 contributes to the ATP binding site; that stretch reads GESGAGKT. S371 carries the post-translational modification Phosphoserine. The tract at residues 418-500 is actin-binding; that stretch reads SIGILDIYGF…PGVFAALNDA (83 aa). IQ domains follow at residues 733–753 and 754–779; these read HNMAIRIQRAWRNYLRYRIEC and AIRIQRFWRRMTGGLEFIKLRDQGHQ. The TH1 domain occupies 787 to 980; it reads RRRMSLLGSR…TIHTSAGEPP (194 aa). Disordered regions lie at residues 960–1102 and 1144–1270; these read GASN…VLYD and PEAY…DDEW. Residues 963-974 show a composition bias toward polar residues; sequence NVDSYKSSTIHT. Residues 1023–1058 show a composition bias toward pro residues; sequence ARQPMPQPTPQPAAVQPPPAPRPAVSPAAQPRPVPQ. The span at 1059-1078 shows a compositional bias: low complexity; the sequence is PVAAVAAAQHTRNASSSSTR. Over residues 1079–1088 the composition is skewed to pro residues; sequence APPPPPPATP. In terms of domain architecture, SH3 spans 1092–1153; that stretch reads QRKPMAKVLY…PEAYLEEQVA (62 aa). Over residues 1157 to 1167 the composition is skewed to pro residues; sequence KPAPPPPPPAA. 2 stretches are compositionally biased toward low complexity: residues 1168–1186 and 1238–1252; these read PRASPVPATNGAAAAVAAK and NSASNASLAGGLAEA.

Belongs to the TRAFAC class myosin-kinesin ATPase superfamily. Myosin family. Phosphorylation of the TEDS site (Ser-371) is required for the polarization of the actin cytoskeleton. Phosphorylation probably activates the myosin-I ATPase activity.

It is found in the cytoplasm. Its subcellular location is the cytoskeleton. The protein resides in the actin patch. In terms of biological role, type-I myosin implicated in the organization of the actin cytoskeleton. Required for proper actin cytoskeleton polarization. At the cell cortex, assembles in patch-like structures together with proteins from the actin-polymerizing machinery and promotes actin assembly. Functions as actin nucleation-promoting factor (NPF) for the Arp2/3 complex. Plays an important role in polarized growth, spore germination, hyphal morphogenesis, and septal wall formation. The sequence is that of Myosin-1 (myoA) from Aspergillus niger (strain ATCC MYA-4892 / CBS 513.88 / FGSC A1513).